A 229-amino-acid polypeptide reads, in one-letter code: Ribonuclease 3 (229 aa).

Positions 7 to 132 (LKAFEGRIGH…VIAAVYLDAG (126 aa)) constitute an RNase III domain. E45 provides a ligand contact to Mg(2+). D49 is an active-site residue. Positions 118 and 121 each coordinate Mg(2+). E121 is a catalytic residue. A DRBM domain is found at 157 to 226 (DAKTALQEWA…ARALLARMEA (70 aa)).

It belongs to the ribonuclease III family. In terms of assembly, homodimer. It depends on Mg(2+) as a cofactor.

Its subcellular location is the cytoplasm. It catalyses the reaction Endonucleolytic cleavage to 5'-phosphomonoester.. Its function is as follows. Digests double-stranded RNA. Involved in the processing of primary rRNA transcript to yield the immediate precursors to the large and small rRNAs (23S and 16S). Processes some mRNAs, and tRNAs when they are encoded in the rRNA operon. Processes pre-crRNA and tracrRNA of type II CRISPR loci if present in the organism. In Cereibacter sphaeroides (strain ATCC 17029 / ATH 2.4.9) (Rhodobacter sphaeroides), this protein is Ribonuclease 3.